We begin with the raw amino-acid sequence, 346 residues long: 3-keto-steroid reductase (346 aa).

NADP(+) is bound by residues Leu16, Thr39, and Arg45. Catalysis depends on proton donor residues Ser178 and Tyr201. NADP(+)-binding residues include Tyr201, Lys205, and Ser236. Lys205 serves as the catalytic Lowers pKa of active site Tyr.

This sequence belongs to the short-chain dehydrogenases/reductases (SDR) family. ERG27 subfamily.

It catalyses the reaction a 3beta-hydroxysteroid + NADP(+) = a 3-oxosteroid + NADPH + H(+). It functions in the pathway steroid biosynthesis; zymosterol biosynthesis; zymosterol from lanosterol: step 5/6. In terms of biological role, responsible for the reduction of the keto group on the C-3 of sterols. The protein is 3-keto-steroid reductase (ERG27) of Kluyveromyces lactis (strain ATCC 8585 / CBS 2359 / DSM 70799 / NBRC 1267 / NRRL Y-1140 / WM37) (Yeast).